The primary structure comprises 340 residues: tRNA N6-adenosine threonylcarbamoyltransferase (340 aa).

Positions 111 and 115 each coordinate Fe cation. Substrate contacts are provided by residues Leu-134–Gly-138, Asp-167, Gly-180, and Asn-272. Asp-300 provides a ligand contact to Fe cation.

This sequence belongs to the KAE1 / TsaD family. Fe(2+) is required as a cofactor.

The protein resides in the cytoplasm. It carries out the reaction L-threonylcarbamoyladenylate + adenosine(37) in tRNA = N(6)-L-threonylcarbamoyladenosine(37) in tRNA + AMP + H(+). In terms of biological role, required for the formation of a threonylcarbamoyl group on adenosine at position 37 (t(6)A37) in tRNAs that read codons beginning with adenine. Is involved in the transfer of the threonylcarbamoyl moiety of threonylcarbamoyl-AMP (TC-AMP) to the N6 group of A37, together with TsaE and TsaB. TsaD likely plays a direct catalytic role in this reaction. The protein is tRNA N6-adenosine threonylcarbamoyltransferase of Proteus mirabilis (strain HI4320).